The primary structure comprises 519 residues: Molybdate transporter 1 (519 aa).

The next 7 helical transmembrane spans lie at 98–118 (LLHAGLFVAGCVGLLGASQAI), 164–184 (LGTEGLVVGAVALAAMIATTL), 370–390 (AVALSVALLNGAGVWLGAMPC), 412–432 (ILLGCIKAALGLLFGGSLVVL), 436–456 (FPQPLLGALLTVSGIELASVV), 464–484 (GYTFALLTAVAILALDNTGTG), and 485–505 (FLVGLVGVAAVAAYEGAVAAA).

This sequence belongs to the SLC26A/SulP transporter (TC 2.A.53) family.

It is found in the membrane. With respect to regulation, 60% inhibition by 20 uM tungstate or by lack of glucose in the medium, but no inhibition by sulfate. High affinity molybdate transporter. Acts through an energy-dependent process. The polypeptide is Molybdate transporter 1 (MOT1) (Chlamydomonas reinhardtii (Chlamydomonas smithii)).